The following is an 802-amino-acid chain: Oligophrenin-1 (802 aa).

The PH domain maps to 265–368; sequence QPTIEGYLYT…WMEAMDGKEP (104 aa). The 185-residue stretch at 380-564 folds into the Rho-GAP domain; sequence MELNEVGFKF…ILIEHFGKIY (185 aa). Disordered regions lie at residues 641 to 663 and 682 to 802; these read QKSGEMDPGRKSPSRPVSDCQTE and TKAI…GDES. The segment covering 716-732 has biased composition (basic and acidic residues); sequence HHKEGDTDCFSKVRPPG. Over residues 751–768 the composition is skewed to polar residues; it reads SSTSQKPESKPETVSSNA.

In terms of assembly, interacts with HOMER1. Interacts with AMPA receptor complexes. Interacts with SH3GL2 (endophilin-A1). Interacts (via C-terminus) with NR1D1. High expression in brain, particularly in the cerebellum, hippocampus, thalamus, frontal lobes, sensory cortex. Found in the myelin sheaths of peripheral nerves, chromaffin cells within the adrenal medulla, and in extra-adrenal chromaffin cells associated with celiac ganglia.

It is found in the postsynapse. The protein resides in the presynapse. It localises to the cell projection. Its subcellular location is the axon. The protein localises to the dendritic spine. It is found in the dendrite. The protein resides in the cytoplasm. Its function is as follows. Stimulates GTP hydrolysis of members of the Rho family. Its action on RHOA activity and signaling is implicated in growth and stabilization of dendritic spines, and therefore in synaptic function, in hippocampal neurons. Critical for the stabilization of AMPA receptors at postsynaptic sites. Critical for the regulation of synaptic vesicle endocytosis at pre-synaptic terminals. Required for the localization of NR1D1 to dendrites, can suppress its repressor activity and protect it from proteasomal degradation. This Rattus norvegicus (Rat) protein is Oligophrenin-1 (Ophn1).